Reading from the N-terminus, the 136-residue chain is MLFSLRELVQWLGFATFEIFVHLLALLVFSVLLALRVDGLTPGLSWWNVFVPFFAADGLSTYFTTIVSVRLFQDGEKRLAVLRLFWVLTVLSLKFVFEMLLCQKLVEQTRELWFGLITSPVFILLQLLMIRACRVN.

The segment at 1-51 (MLFSLRELVQWLGFATFEIFVHLLALLVFSVLLALRVDGLTPGLSWWNVFV) is interaction with STING1. The next 4 helical transmembrane spans lie at 14–34 (FATF…VLLA), 50–72 (FVPF…VRLF), 81–101 (VLRL…EMLL), and 112–132 (LWFG…MIRA). The segment at 52–136 (PFFAADGLST…LLMIRACRVN (85 aa)) is required for lysosomal localization of the STING-TMEM203 complex.

Homodimer. Interacts with ATP2A2 and ITPR3. Interacts with STIM1 and STING1 (via transmembrane domain).

Its subcellular location is the endoplasmic reticulum membrane. It is found in the endoplasmic reticulum-Golgi intermediate compartment. It localises to the lysosome membrane. Its function is as follows. Involved in the regulation of cellular calcium homeotasis. Required for spermatogenesis. Acts as a regulator of STING-mediated inflammatory signaling in macrophages. Forms a complex with STING, promoting the activity of TBK1 kinase and the transcription factor IRF3, leading to activation of type I interferon expression. This is Transmembrane protein 203 (Tmem203) from Mus musculus (Mouse).